The sequence spans 770 residues: uncharacterized protein (770 aa).

The first 24 residues, 1–24 (MVSAAWLRYPSLLTLGILVSRVAA), serve as a signal peptide directing secretion. N78, N204, N533, and N638 each carry an N-linked (GlcNAc...) asparagine glycan. Residues 746-770 (SWGTGQNDVPPSLGAGIKRDGLRFT) form a disordered region.

The protein belongs to the glycosyl hydrolase 92 family.

The protein localises to the secreted. This is an uncharacterized protein from Arthroderma benhamiae (strain ATCC MYA-4681 / CBS 112371) (Trichophyton mentagrophytes).